The following is a 417-amino-acid chain: Serine hydroxymethyltransferase (417 aa).

(6S)-5,6,7,8-tetrahydrofolate contacts are provided by residues Leu-121 and 125 to 127; that span reads GHL. At Lys-230 the chain carries N6-(pyridoxal phosphate)lysine. 355–357 is a binding site for (6S)-5,6,7,8-tetrahydrofolate; the sequence is SPF.

The protein belongs to the SHMT family. Homodimer. The cofactor is pyridoxal 5'-phosphate.

The protein localises to the cytoplasm. The catalysed reaction is (6R)-5,10-methylene-5,6,7,8-tetrahydrofolate + glycine + H2O = (6S)-5,6,7,8-tetrahydrofolate + L-serine. It functions in the pathway one-carbon metabolism; tetrahydrofolate interconversion. The protein operates within amino-acid biosynthesis; glycine biosynthesis; glycine from L-serine: step 1/1. Functionally, catalyzes the reversible interconversion of serine and glycine with tetrahydrofolate (THF) serving as the one-carbon carrier. This reaction serves as the major source of one-carbon groups required for the biosynthesis of purines, thymidylate, methionine, and other important biomolecules. Also exhibits THF-independent aldolase activity toward beta-hydroxyamino acids, producing glycine and aldehydes, via a retro-aldol mechanism. The sequence is that of Serine hydroxymethyltransferase from Marinobacter nauticus (strain ATCC 700491 / DSM 11845 / VT8) (Marinobacter aquaeolei).